The primary structure comprises 1357 residues: DNA-directed RNA polymerase subunit beta (1357 aa).

It belongs to the RNA polymerase beta chain family. The RNAP catalytic core consists of 2 alpha, 1 beta, 1 beta' and 1 omega subunit. When a sigma factor is associated with the core the holoenzyme is formed, which can initiate transcription.

The catalysed reaction is RNA(n) + a ribonucleoside 5'-triphosphate = RNA(n+1) + diphosphate. In terms of biological role, DNA-dependent RNA polymerase catalyzes the transcription of DNA into RNA using the four ribonucleoside triphosphates as substrates. This is DNA-directed RNA polymerase subunit beta from Pseudomonas aeruginosa (strain LESB58).